The following is a 373-amino-acid chain: Type 2 DNA topoisomerase 6 subunit A (373 aa).

The Topo IIA-type catalytic domain maps to 15 to 153 (QGDTLAKERL…FHMRPEEDGA (139 aa)). The active-site O-(5'-phospho-DNA)-tyrosine intermediate is the tyrosine 110. 2 residues coordinate Mg(2+): glutamate 206 and aspartate 258.

Belongs to the TOP6A family. In terms of assembly, homodimer. Heterotetramer of two Top6A and two Top6B chains. Mg(2+) serves as cofactor.

It catalyses the reaction ATP-dependent breakage, passage and rejoining of double-stranded DNA.. Functionally, relaxes both positive and negative superturns and exhibits a strong decatenase activity. The sequence is that of Type 2 DNA topoisomerase 6 subunit A from Methanosarcina acetivorans (strain ATCC 35395 / DSM 2834 / JCM 12185 / C2A).